A 142-amino-acid chain; its full sequence is MKTFVAKPHEVTRDWFVIDAKGKVLGRVASEVARRLRGKHKPEFTPHVDTGDYIVIINAADIVVTGKKSQDKKYFRHTTYPGGIRETNFEKMQERFPGRAIQKAVKGMLPKGPLGYAMIKKLKVYAGAEHPHTAQQPKPLDL.

This sequence belongs to the universal ribosomal protein uL13 family. Part of the 50S ribosomal subunit.

Its function is as follows. This protein is one of the early assembly proteins of the 50S ribosomal subunit, although it is not seen to bind rRNA by itself. It is important during the early stages of 50S assembly. The chain is Large ribosomal subunit protein uL13 from Bordetella avium (strain 197N).